The sequence spans 312 residues: tRNA dimethylallyltransferase (312 aa).

ATP is bound at residue 17 to 24; the sequence is GPTASGKS. 19 to 24 provides a ligand contact to substrate; that stretch reads TASGKS.

Belongs to the IPP transferase family. Monomer. It depends on Mg(2+) as a cofactor.

The catalysed reaction is adenosine(37) in tRNA + dimethylallyl diphosphate = N(6)-dimethylallyladenosine(37) in tRNA + diphosphate. Catalyzes the transfer of a dimethylallyl group onto the adenine at position 37 in tRNAs that read codons beginning with uridine, leading to the formation of N6-(dimethylallyl)adenosine (i(6)A). The protein is tRNA dimethylallyltransferase of Zymomonas mobilis subsp. mobilis (strain ATCC 31821 / ZM4 / CP4).